The sequence spans 1877 residues: Protein TIC 214 (1877 aa).

6 consecutive transmembrane segments (helical) span residues 18–38 (IINSVVVVGLYYGFLTTFSVG), 64–84 (FITGQLMMFISIYYAPLHLAL), 87–107 (PHTITVLVLPYLLFHFFWKNH), 124–144 (LSIQCVFLNNLIFQLFNHFIL), 172–192 (VGWLIGHILFMKWVGLVLFWI), and 221–241 (IFRILLFITCVYYLGRIPSPI). 3 disordered regions span residues 246-313 (LKET…GKEK), 644-695 (DDFE…NSDR), and 774-795 (PEFKTSDSEEKEAKEEEKQKKE). Composition is skewed to acidic residues over residues 251–268 (ETEEGGESEEETDVEIET), 281–304 (GSTEEDPSLCSEEKEDPDKIDETE), and 645–659 (DFEEQEEEDEEESTE). Residues 685 to 695 (TSTKDTTNSDR) are compositionally biased toward basic and acidic residues.

The protein belongs to the TIC214 family. Part of the Tic complex.

The protein resides in the plastid. It localises to the chloroplast inner membrane. Functionally, involved in protein precursor import into chloroplasts. May be part of an intermediate translocation complex acting as a protein-conducting channel at the inner envelope. This is Protein TIC 214 from Chloranthus spicatus (Chulantree).